The following is a 209-amino-acid chain: CASP-like protein 2A1 (209 aa).

The Cytoplasmic segment spans residues 1-38; sequence MSKMAEEKVLAAPATVDGGMQSSGDLQASSAAAARVRP. A helical membrane pass occupies residues 39–59; it reads VETLLRAAPLGLCVAAMAIML. Residues 60–80 lie on the Extracellular side of the membrane; it reads RNSVTNEYGTVSYSDLGGFKY. A helical membrane pass occupies residues 81–101; the sequence is LVYANGLCAAYSLASAFYIAV. The Cytoplasmic segment spans residues 102–109; the sequence is PRPATLSR. The helical transmembrane segment at 110 to 130 threads the bilayer; that stretch reads SWVVFLLDQVFTYLILAAGAA. The Extracellular portion of the chain corresponds to 131–163; it reads SAELLYLAYNGDKEVTWSEACGVFGGFCRQART. A helical membrane pass occupies residues 164-184; sequence SVAITFASVACYILLSLISSY. The Cytoplasmic segment spans residues 185 to 209; that stretch reads RLFSAYDPPQPSLGNKGVEIAAFPR.

The protein belongs to the Casparian strip membrane proteins (CASP) family. Homodimer and heterodimers.

The protein resides in the cell membrane. This chain is CASP-like protein 2A1, found in Oryza sativa subsp. indica (Rice).